The primary structure comprises 648 residues: Serine/threonine-protein kinase PrkC (648 aa).

Topologically, residues 1-330 (MLIGKRISGR…KKNGKRKKWP (330 aa)) are cytoplasmic. Residues 11-271 (YQILRVIGGG…DMEADIKTAF (261 aa)) form the Protein kinase domain. ATP contacts are provided by residues 17–25 (IGGGGMANV) and K40. Catalysis depends on D134, which acts as the Proton acceptor. T162, T163, T165, and T167 each carry phosphothreonine; by autocatalysis. At S214 the chain carries Phosphoserine; by autocatalysis. Phosphothreonine; by autocatalysis occurs at positions 290, 313, and 320. The chain crosses the membrane as a helical span at residues 331-351 (WVLLTICLVFITAGILAVTVF). Residues 352-648 (PSLFMPKDVK…YKTIEYPKDE (297 aa)) lie on the Extracellular side of the membrane. PASTA domains follow at residues 356–424 (MPKD…YKST), 425–492 (GKAK…TVSI), and 493–559 (GPED…TFSL).

Belongs to the protein kinase superfamily. Ser/Thr protein kinase family. Homodimer. In terms of processing, autophosphorylation on threonine residue(s) and serine residue considerably increases the kinase activity of the protein. Dephosphorylated in vitro by PrpC.

Its subcellular location is the spore membrane. The enzyme catalyses L-seryl-[protein] + ATP = O-phospho-L-seryl-[protein] + ADP + H(+). It catalyses the reaction L-threonyl-[protein] + ATP = O-phospho-L-threonyl-[protein] + ADP + H(+). Its activity is regulated as follows. Bryostatin activates PrkC activity and induces germination, whereas staurosporine inhibits PrkC and significantly reduced peptidoglycan-dependent germination. Kinase activity of isolated N-terminus stimulated by poly-L-lysine or myelin basic protein. Functionally, protein kinase that is responsible for triggering spore germination in response to muropeptides, signaling bacteria to exit dormancy. PrkC is thus a germination receptor that binds peptidoglycan fragments containing m-Dpm (meso-diaminopimelate), which act as spore germinants. Autophosphorylates and phosphorylates EF-G (elongation factor G, fusA); the latter modification is likely necessary for germination in response to peptidoglycan. Another group did not detect phosphorylation of EF-G. PrkC is a substrate in vitro of the cotranscribed phosphatase PrpC, which suggests that they form a functional couple in vivo. Might also be involved in sporulation and biofilm formation. Does not seem to be involved in stress response. This Bacillus subtilis (strain 168) protein is Serine/threonine-protein kinase PrkC (prkC).